The primary structure comprises 74 residues: Fulgimotoxin (74 aa).

A Pyrrolidone carboxylic acid modification is found at glutamine 1. 5 cysteine pairs are disulfide-bonded: cysteine 10–cysteine 34, cysteine 13–cysteine 21, cysteine 27–cysteine 51, cysteine 55–cysteine 66, and cysteine 67–cysteine 72.

This sequence belongs to the three-finger toxin family. Ancestral subfamily. Boigatoxin sub-subfamily. As to quaternary structure, monomer. In terms of processing, the N-terminus is blocked. Contains 5 disulfide bonds. Expressed by the venom gland.

It localises to the secreted. Its function is as follows. Reptile-specific three-finger toxin that is lethal at low doses for lizards, but not for mice. Probably acts as a neurotoxin. The polypeptide is Fulgimotoxin (Oxybelis fulgidus (Green vine snake)).